The primary structure comprises 227 residues: Type II restriction enzyme ScaI (227 aa).

The disordered stretch occupies residues glutamate 12–glycine 35.

It catalyses the reaction Endonucleolytic cleavage of DNA to give specific double-stranded fragments with terminal 5'-phosphates.. Functionally, a P subtype restriction enzyme that recognizes the double-stranded sequence 5'-AGTACT-3' and cleaves after T-3. In Streptomyces caespitosus, this protein is Type II restriction enzyme ScaI.